We begin with the raw amino-acid sequence, 95 residues long: Cystatin-A2 (95 aa).

The Secondary area of contact signature appears at 47–51 (QLVNG).

It belongs to the cystatin family.

The protein localises to the cytoplasm. Functionally, intracellular thiol proteinase inhibitor. Inhibits cathepsin B, but not papain. The sequence is that of Cystatin-A2 (cpiB) from Dictyostelium discoideum (Social amoeba).